The following is a 1462-amino-acid chain: MEVPRASPNQEPLCSISPSSLVINEIITVVTAIRKTTRWRNSGVASILGVSTLKDEFLADGLESRWKTNGEKSSSIRYPLVMEFSQLKEDLTNRASLNGYDSLKLLSPFLRTIKSPRMTGYITSLCLSAILKFFSFRIISEESPNLALSMRNLSFAITQCRFESFDASQDEAVLLRVSRLMEELLRGPGKAVLSDDSICEIVETGLSMCCQSRLSQVLRYSAELSMTSILEKIFERLKYIDVKTDSEDFWDASEEHSIKGEEFHYKKITEGDEISNEIDPFGIGSIREVFRVLVSFIDFGKQKFSDNIKAMALRFINTALEVSGSHISDFPSLRVLITDTLCKSLLQLIRSDHTALLTNSLLVMTTLLQAMPGSLKLQQELFISYLISCLHIPSTTPRERNVETSLHKVVSSLDLSEEISPDRATPTSFTERKRFAFDTRNRPPEVRELIVECLGSLSRIPYFLIDLYVNYDCDPQMSDLAIDLLKVLTRNCLVDSARYSTANVPPLCLDALLNFIYYFHEHLQPCYNDPNNTFKDDVAKTLIESKKRKAIIIEGAELFNESPSDGIAFLTQHSIIKQSDNPTCIVEFFHSTNRLSKRVLGEFLTKGSNSHILNAFISAFDFKGKRIDEALRLLLQSFRLPGESQLIERVLETFSHYYMSANPDSMSSKDAAFVLSYSIIMLNTDQHNPNIKSQRRMTLDDFCRNVRGVNDGQDFDRNFLSEIYKAIKENEIIVAEEHDTELSFLYIWSKLQQSVKITEPFKRSSSNVHDKIVFLEVWKSIMAALIYVFSTATEDTVFYRVVNGIQQATEVAAAYELNEPVDYAIERFCQFTALDPSSVPGTQLNTAIKVEDRIITVSELSVRFGRDFRAQLALLVLFWISSKFGNIIDASWPLLVQLTICLARNNLIDNSFLPGFKLFGYQWFPFPEPPLNSGKPALSKEGGLLSALSSYLSSYANDEPPCPTDEEIQHTLCTIDCISSAKIDNFLTKLVDLKQPGLNKLLDSLLSLSNPSTSLLTDENTVDDNKVSSVEALSNIQSAIVADLLTSLFLGTRESLNKLERRTQILSYLLFQIEQSGDEKVINQLSLYIFEMFMDDDLKLSENSEDWGLFSKLCNLLNDKNIVVRNQSLSLFHQLVNKYPFLLESWIGLQLVQSAVNTNTADIDDLYRLLSKIPTNLLDLPMFQVYLGCVDTLIQTIVKQIAQILSKQKKGASKGLPFDKSILDNHSAELNDAFNLFLKAAVEYKVDSNESSEHFQDTRWKIIYDHVCKLCLSRSRSLRAASLSCLQRIVVEQLDQPHEVSYTMALFHLVLLPTMENMITVLTEKPEHKIFGLAQAQMFNIICKTVLIDMNVLSAQKEMLHTLWLKLMDVAIKLSSIHGSESMAEVMESIKNVFMILHGAGALAGPTIEVDPEIPDHLIKTWNTTWNNLFIYYPELSNDLNINNEAEMKKENLKNPSQTTTV.

Residues 119-139 traverse the membrane as a helical segment; sequence TGYITSLCLSAILKFFSFRII. Phosphoserine occurs at positions 411 and 420. Residues 541 to 730 enclose the SEC7 domain; it reads TLIESKKRKA…SEIYKAIKEN (190 aa). One copy of the HEAT repeat lies at 1102–1139; that stretch reads ENSEDWGLFSKLCNLLNDKNIVVRNQSLSLFHQLVNKY.

The protein resides in the cytoplasm. It localises to the golgi apparatus membrane. This is an uncharacterized protein from Schizosaccharomyces pombe (strain 972 / ATCC 24843) (Fission yeast).